The following is a 411-amino-acid chain: Flavohemoprotein (411 aa).

The Globin domain occupies 5 to 142 (TLSQETKQIV…IADVFIQVEK (138 aa)). H89 contacts heme b. Catalysis depends on charge relay system residues Y99 and E141. The tract at residues 153–411 (GGWREFRSFV…FGPAGTLASS (259 aa)) is reductase. Residues 156–267 (REFRSFVVEK…TAPAGDFTLQ (112 aa)) form the FAD-binding FR-type domain. FAD contacts are provided by residues Y194 and 210–213 (RQYS). 280–285 (GVGITP) is a binding site for NADP(+). An FAD-binding site is contributed by 401–404 (FFGP).

This sequence belongs to the globin family. Two-domain flavohemoproteins subfamily. The protein in the C-terminal section; belongs to the flavoprotein pyridine nucleotide cytochrome reductase family. It depends on heme b as a cofactor. FAD is required as a cofactor.

The catalysed reaction is 2 nitric oxide + NADPH + 2 O2 = 2 nitrate + NADP(+) + H(+). It catalyses the reaction 2 nitric oxide + NADH + 2 O2 = 2 nitrate + NAD(+) + H(+). Functionally, is involved in NO detoxification in an aerobic process, termed nitric oxide dioxygenase (NOD) reaction that utilizes O(2) and NAD(P)H to convert NO to nitrate, which protects the bacterium from various noxious nitrogen compounds. Therefore, plays a central role in the inducible response to nitrosative stress. This Halalkalibacterium halodurans (strain ATCC BAA-125 / DSM 18197 / FERM 7344 / JCM 9153 / C-125) (Bacillus halodurans) protein is Flavohemoprotein.